The following is a 356-amino-acid chain: UDP-3-O-acylglucosamine N-acyltransferase (356 aa).

Histidine 242 acts as the Proton acceptor in catalysis.

The protein belongs to the transferase hexapeptide repeat family. LpxD subfamily. In terms of assembly, homotrimer.

It carries out the reaction a UDP-3-O-[(3R)-3-hydroxyacyl]-alpha-D-glucosamine + a (3R)-hydroxyacyl-[ACP] = a UDP-2-N,3-O-bis[(3R)-3-hydroxyacyl]-alpha-D-glucosamine + holo-[ACP] + H(+). Its pathway is bacterial outer membrane biogenesis; LPS lipid A biosynthesis. In terms of biological role, catalyzes the N-acylation of UDP-3-O-acylglucosamine using 3-hydroxyacyl-ACP as the acyl donor. Is involved in the biosynthesis of lipid A, a phosphorylated glycolipid that anchors the lipopolysaccharide to the outer membrane of the cell. In Acinetobacter baumannii (strain AB307-0294), this protein is UDP-3-O-acylglucosamine N-acyltransferase.